We begin with the raw amino-acid sequence, 1119 residues long: DNA-directed RNA polymerase subunit beta (1119 aa).

The protein belongs to the RNA polymerase beta chain family. The RNAP catalytic core consists of 2 alpha, 1 beta, 1 beta' and 1 omega subunit. When a sigma factor is associated with the core the holoenzyme is formed, which can initiate transcription.

It catalyses the reaction RNA(n) + a ribonucleoside 5'-triphosphate = RNA(n+1) + diphosphate. DNA-dependent RNA polymerase catalyzes the transcription of DNA into RNA using the four ribonucleoside triphosphates as substrates. This chain is DNA-directed RNA polymerase subunit beta, found in Thermus thermophilus (strain ATCC BAA-163 / DSM 7039 / HB27).